Consider the following 258-residue polypeptide: Isoprenyl transferase (258 aa).

Residue Asp-38 is part of the active site. A Mg(2+)-binding site is contributed by Asp-38. Residues 39 to 42 (GNGR), Trp-43, Arg-51, His-55, and 83 to 85 (STE) each bind substrate. The active-site Proton acceptor is Asn-86. Residues Trp-87, Arg-89, Arg-206, and 212–214 (RIS) each bind substrate. Glu-225 lines the Mg(2+) pocket.

It belongs to the UPP synthase family. As to quaternary structure, homodimer. Mg(2+) serves as cofactor.

Functionally, catalyzes the condensation of isopentenyl diphosphate (IPP) with allylic pyrophosphates generating different type of terpenoids. The sequence is that of Isoprenyl transferase from Bacillus cereus (strain ATCC 14579 / DSM 31 / CCUG 7414 / JCM 2152 / NBRC 15305 / NCIMB 9373 / NCTC 2599 / NRRL B-3711).